A 572-amino-acid polypeptide reads, in one-letter code: Urease subunit alpha (572 aa).

The region spanning 133–572 (GGIDLHVHYI…TSLSQRYFLF (440 aa)) is the Urease domain. 3 residues coordinate Ni(2+): His138, His140, and Lys221. Lys221 carries the N6-carboxylysine modification. Position 223 (His223) interacts with substrate. His250 and His276 together coordinate Ni(2+). The Proton donor role is filled by His324. Residue Asp364 participates in Ni(2+) binding.

It belongs to the metallo-dependent hydrolases superfamily. Urease alpha subunit family. Heterotrimer of UreA (gamma), UreB (beta) and UreC (alpha) subunits. Three heterotrimers associate to form the active enzyme. Ni cation is required as a cofactor. Carboxylation allows a single lysine to coordinate two nickel ions.

The protein resides in the cytoplasm. The catalysed reaction is urea + 2 H2O + H(+) = hydrogencarbonate + 2 NH4(+). It participates in nitrogen metabolism; urea degradation; CO(2) and NH(3) from urea (urease route): step 1/1. Its function is as follows. Ureolysis may allow urea to be employed as a nitrogen source for growth and produces ammonia which may protect from killing at low pH. The protein is Urease subunit alpha of Streptococcus salivarius (strain 57.I).